The primary structure comprises 1253 residues: Methionine synthase (1253 aa).

A Hcy-binding domain is found at 6–326 (QDEIEAILRK…DHIREIAEAV (321 aa)). Residues cysteine 248, cysteine 311, and cysteine 312 each contribute to the Zn(2+) site. A Pterin-binding domain is found at 359–620 (FVNIGERCNV…IHKDLLQLCE (262 aa)). Residues 370-372 (GSR), aspartate 437, asparagine 458, aspartate 525, asparagine 567, arginine 573, and arginine 579 each bind (6S)-5,6,7,8-tetrahydrofolate. The B12-binding N-terminal domain maps to 650-747 (QTDEWRNGSI…FMEKEREEAR (98 aa)). Methylcob(III)alamin is bound by residues glutamate 697, 770-774 (GDVHD), histidine 773, serine 818, threonine 822, and alanine 874. In terms of domain architecture, B12-binding spans 760-895 (QGTIVLATVK…DENLRDDYFE (136 aa)). Residues 911–1253 (SLKERKYVPL…LGPILGYDTD (343 aa)) form the AdoMet activation domain. S-adenosyl-L-methionine contacts are provided by residues aspartate 962, arginine 1160, and 1215 to 1216 (YF). Threonine 1252 is modified (phosphothreonine).

The protein belongs to the vitamin-B12 dependent methionine synthase family. As to quaternary structure, monomer. Dimer. Forms a multiprotein complex with MMACHC, MMADHC and MTRR. Methylcob(III)alamin is required as a cofactor. Requires Zn(2+) as cofactor.

The protein resides in the cytoplasm. It carries out the reaction (6S)-5-methyl-5,6,7,8-tetrahydrofolate + L-homocysteine = (6S)-5,6,7,8-tetrahydrofolate + L-methionine. It functions in the pathway amino-acid biosynthesis; L-methionine biosynthesis via de novo pathway; L-methionine from L-homocysteine (MetH route): step 1/1. Catalyzes the transfer of a methyl group from methylcob(III)alamin (MeCbl) to homocysteine, yielding enzyme-bound cob(I)alamin and methionine in the cytosol. MeCbl is an active form of cobalamin (vitamin B12) used as a cofactor for methionine biosynthesis. Cob(I)alamin form is regenerated to MeCbl by a transfer of a methyl group from 5-methyltetrahydrofolate. The processing of cobalamin in the cytosol occurs in a multiprotein complex composed of at least MMACHC, MMADHC, MTRR (methionine synthase reductase) and MTR which may contribute to shuttle safely and efficiently cobalamin towards MTR in order to produce methionine. This chain is Methionine synthase, found in Mus musculus (Mouse).